Here is a 518-residue protein sequence, read N- to C-terminus: Arrestin-related trafficking adapter 10 (518 aa).

Lys118 is covalently cross-linked (Glycyl lysine isopeptide (Lys-Gly) (interchain with G-Cter in ubiquitin)).

The protein belongs to the ART10 family. As to quaternary structure, interacts with RSP5. Ubiquitinated by RSP5.

It localises to the cytoplasm. May regulate endocytosis by recruiting RSP5 ubiquitin ligase activity to specific plasma membrane proteins in response to extracellular stimuli. The polypeptide is Arrestin-related trafficking adapter 10 (ART10) (Saccharomyces cerevisiae (strain RM11-1a) (Baker's yeast)).